Here is a 751-residue protein sequence, read N- to C-terminus: MTDKQHTRSVSESENPAIPSPTPKVSRPRRNKDWWPNQLDLSVLHTHSHLSCPLEEEFDYADQFKGLDVDALKQDLIQLMTTSQDWWPADYGHYGPLFIRMSWHAAGTYRIADGRGGGGEGQQRFAPLNSWPDNANLDKARRLLWPLKKKYGQKVSWADLLIFAGNVAYESMGFKTFGFGFGRPDVWEPEDIFWGPEDTWLGDERYSGDRELAKPLANVQMGLIYVNPEGPGGNPDPLAAARDIRETFARMAMNDEETVALIVGGHTVGKTHGAAPAAGNVGLEPEGAPIEEQGLGWKNKFGSGKGSDAITSGLEGAWTNNPTKWDNGFLENLFKYEWELTTSPAGAKQWKPKNPEANDTVPDAHGASRRHSPTMLTTDLSLRMDPIYGPIAKRFHDNPDQLEDAFAKAWFKLLHRDMGPRSRYLGPWIPEAQLWQDPIPPVDHELVSEQDIDALKRTILGSGLSVPELISTAWGAAASFRGTDKRGGANGARIRLAPQKDWESNEPSRLAKVLTALERIQNDFNGSQSGGKKVSLADLIVLGGCAAVEEAARKAGFNISVPFAPGRTDASQEQTDESIFDVLEPIGDAFRNYFRAEDPLSPETRLLDRANLLKLTAPQMTVLVGGMRMLDANHGQSRHGVFTDKPGTLSNEFFVNLLDIGTAWRPSVADKSVYEGIDRTSGKTRWTATAADLVFGAHSQLRALAEVYACDDGKERFVRDFVAAWNKVMNLDRYDLLGTRNGRRAVTSKPV.

Residues 1-11 (MTDKQHTRSVS) are compositionally biased toward basic and acidic residues. The segment at 1–31 (MTDKQHTRSVSESENPAIPSPTPKVSRPRRN) is disordered. The segment at residues 103–225 (WHAAGTYRIA…LANVQMGLIY (123 aa)) is a cross-link (tryptophyl-tyrosyl-methioninium (Trp-Tyr) (with M-251)). Residue H104 is the Proton acceptor of the active site. A cross-link (tryptophyl-tyrosyl-methioninium (Tyr-Met) (with W-103)) is located at residues 225–251 (YVNPEGPGGNPDPLAAARDIRETFARM). H266 lines the heme b pocket. Residues 345–375 (AGAKQWKPKNPEANDTVPDAHGASRRHSPTM) form a disordered region.

This sequence belongs to the peroxidase family. Peroxidase/catalase subfamily. Homodimer or homotetramer. Heme b serves as cofactor. Formation of the three residue Trp-Tyr-Met cross-link is important for the catalase, but not the peroxidase activity of the enzyme.

It carries out the reaction H2O2 + AH2 = A + 2 H2O. The enzyme catalyses 2 H2O2 = O2 + 2 H2O. Functionally, bifunctional enzyme with both catalase and broad-spectrum peroxidase activity. This chain is Catalase-peroxidase 1, found in Cupriavidus pinatubonensis (strain JMP 134 / LMG 1197) (Cupriavidus necator (strain JMP 134)).